The chain runs to 164 residues: Transcription elongation factor GreA (164 aa).

It belongs to the GreA/GreB family.

Necessary for efficient RNA polymerase transcription elongation past template-encoded arresting sites. The arresting sites in DNA have the property of trapping a certain fraction of elongating RNA polymerases that pass through, resulting in locked ternary complexes. Cleavage of the nascent transcript by cleavage factors such as GreA or GreB allows the resumption of elongation from the new 3'terminus. GreA releases sequences of 2 to 3 nucleotides. This chain is Transcription elongation factor GreA, found in Helicobacter pylori (strain Shi470).